A 1578-amino-acid polypeptide reads, in one-letter code: MEELETSLFQTRKAHRIEQMVARWLRRSRDSSARAKVAAADGPARNPTQTLIPVRHTVKIDKDTLLQDYGFHISESLPLTVVAVTAGGSAHGKLFPGDQILQMNNEPAEDLSWERAVDILREAEDSLSITVVRCTSGVPKSSFLTEEKRARLKTNPVKVHFAEEVLISGHSQGNSLLCMPNVLKLYLENGQTKAFKFEANTTVKDIILTVKEKLSIRSIEYFALALEEQYSISRLHLLHEEELIQQVVEREESHDYRCLFRVCFVPKDPLDLLKEDPVAFEYLYLQSCSDVLQERFAVEMKCSSALRLAALHIQERIYACAQPQKISLKYIEKDWGIENFISPTLLRNMKGKDIKKAISFHMKRNQNLLEPRQKQLISAAQLRLNYLQILGELKTYGGRIFNATLMLQDRESYIALLVGAKYGISQVINSKLNIMSTLAEFANISRVELTEESEKVSVVKVYLQDVKVLTLLLESNSAKDLACLIAGYYRLLVDPVTSIFLWPGNKQQAHRVSAEEGYESRACSDSEESSEVDCVLEPLSDRRLVKLAPCRSLIKEEQPPGNSPTPEVARRGPSTCGASSTTDSAESEASDSANTESRGYRTSGSSESMDALEEDDLDTCSSSRSTFFHFGSPGLAESIDSDSQEERSGIETSGFLCLLDLAQRANPQCQKTEFSESAALETFGWAPELSTVRLDPRLYEGSHADYYSLCSSVSPASYLSDSSESTASRQGGAPPAWGQQGWTEAQPSSMLEPLALHPPLAFEDGSSDEEYYDAADKLTPPGPPSGPRDVSTAEPSATSLQNKASTSSPENSLPCGPDGRQPSRRGGVKKYAKTLRKRRSFLQTDYTSQVSFPLVPSASLESVDDVCYYDREPYLALGAPSPTVSSLQDMQGEPGLLETKALGLLAPLRETKSTNPASRVMEMEPETMETKSVIDSRVSSISAIRFRIDPNNKENSGVVPAASSSASTPHCSNPGSSGPDTAQARPSQILPLSQDLDGIAPKEPTIEHGDSSFSLSSGDPNPDRACLASNPGLNNVSQGDTLELQLEPHVQLEMGLESFCTNHIQETAPKYTEPLLSPRDEPRSDECGINPGEKIASIPTKEEPQGQLSLERDREVTNKNGTNVFQEESRKDSGDSPGDVSNNVSQTLDISSPAGKIVTSLSLDAPVTGTEQIPPHPPRDPQGQSREPPGQGCQAQEQKLFVELDLDPDFFLGKQTVSPAVPPEGIKAEAPNHVTGQDIAPRDSPEWVCFNPEPSLPEPLPCPQEDPHLETSNHCLLSEGKSDSSSICLSAEKSFLCFAPESHPEVSASLRVATSLGFAGMNEMVAPRIGMDQCSCQFSYATCFRGPQPETEEEDRDLEAHPMAPLTSPPSAGSPVVLPWRPARAHSCTTAPLSRKSHIWPEYCSRALRQLKATPASTPEGFIQLMESLLELQDILETSWGVGNKHPPEKCTWHFTESRSRLCMGSQKLLSSCRHVIRMDQSPEEMQGAVRDTFQHLVQLAGLCFQFTDCSRCSARHREAAGNLRDVVYTYHQFIEAAKSTCERGYHDLSVKLLARQCTALTAAVFCLTQKFRASTAL.

The PDZ domain maps to 57–135; it reads TVKIDKDTLL…SLSITVVRCT (79 aa). The FERM domain maps to 181 to 496; it reads NVLKLYLENG…GYYRLLVDPV (316 aa). Disordered regions lie at residues 555-616, 720-743, and 759-831; these read KEEQ…EEDD, SDSSESTASRQGGAPPAWGQQGWT, and PLAF…VKKY. Polar residues predominate over residues 720–729; that stretch reads SDSSESTASR. Positions 730–742 are enriched in low complexity; the sequence is QGGAPPAWGQQGW. Polar residues predominate over residues 793–811; it reads AEPSATSLQNKASTSSPEN. Basic residues predominate over residues 822-831; it reads PSRRGGVKKY. Residues 924-931 are important for interaction with GPSM2; it reads EPETMETK. Disordered regions lie at residues 950 to 1030, 1070 to 1194, and 1347 to 1374; these read PNNK…LASN, KYTE…QGCQ, and PQPETEEEDRDLEAHPMAPLTSPPSAGS. A compositionally biased stretch (polar residues) spans 968 to 986; sequence TPHCSNPGSSGPDTAQARP. The span at 1100 to 1117 shows a compositional bias: basic and acidic residues; sequence TKEEPQGQLSLERDREVT. Positions 1139 to 1150 are enriched in polar residues; that stretch reads DVSNNVSQTLDI.

Interacts with GPSM1. Interacts with GPSM2 (via TPR repeat region).

The protein localises to the cytoplasm. It is found in the cytosol. Its subcellular location is the cell membrane. In terms of biological role, stabilizes membrane-bound GPSM1, and thereby promotes its interaction with GNAI1. The polypeptide is FERM and PDZ domain-containing protein 1 (FRMPD1) (Homo sapiens (Human)).